The chain runs to 168 residues: Microtubule-associated protein Jupiter (168 aa).

The segment covering 1 to 14 (MISNFDCTDNQASS) has biased composition (polar residues). Positions 1–33 (MISNFDCTDNQASSKVLRPPGGGSSDIFGSEMP) are disordered. Phosphoserine is present on Ser24. Phosphothreonine is present on Thr35. The segment covering 76 to 87 (RGQKTVDSHSRL) has biased composition (basic and acidic residues). 2 disordered regions span residues 76–106 (RGQK…KSSI) and 124–168 (NGHY…GAGK). Thr92 and Thr96 each carry phosphothreonine. Residues Ser105, Ser133, and Ser144 each carry the phosphoserine modification. The segment covering 131-144 (SGSVSSASSSVSSS) has biased composition (low complexity). Residues 145-155 (TENLKMNSGSR) show a composition bias toward polar residues.

Belongs to the MAP Jupiter family.

It localises to the nucleus. The protein localises to the cytoplasm. Its subcellular location is the cytoskeleton. It is found in the spindle. Functionally, binds to all microtubule populations. In Drosophila simulans (Fruit fly), this protein is Microtubule-associated protein Jupiter.